Reading from the N-terminus, the 125-residue chain is Small ribosomal subunit protein uS13 (125 aa).

The segment at 95-125 (GLPVNGQRTRTNARTRKGGKKTVANKKKVTK) is disordered. Over residues 105–125 (TNARTRKGGKKTVANKKKVTK) the composition is skewed to basic residues.

The protein belongs to the universal ribosomal protein uS13 family. Part of the 30S ribosomal subunit. Forms a loose heterodimer with protein S19. Forms two bridges to the 50S subunit in the 70S ribosome.

Its function is as follows. Located at the top of the head of the 30S subunit, it contacts several helices of the 16S rRNA. In the 70S ribosome it contacts the 23S rRNA (bridge B1a) and protein L5 of the 50S subunit (bridge B1b), connecting the 2 subunits; these bridges are implicated in subunit movement. Contacts the tRNAs in the A and P-sites. This Leptospira borgpetersenii serovar Hardjo-bovis (strain L550) protein is Small ribosomal subunit protein uS13.